Here is a 302-residue protein sequence, read N- to C-terminus: Aspartate carbamoyltransferase catalytic subunit (302 aa).

2 residues coordinate carbamoyl phosphate: R55 and T56. Residue K83 participates in L-aspartate binding. Residues R105, H133, and Q136 each coordinate carbamoyl phosphate. R166 and R222 together coordinate L-aspartate. Carbamoyl phosphate contacts are provided by G262 and P263.

It belongs to the aspartate/ornithine carbamoyltransferase superfamily. ATCase family. As to quaternary structure, heterododecamer (2C3:3R2) of six catalytic PyrB chains organized as two trimers (C3), and six regulatory PyrI chains organized as three dimers (R2).

The catalysed reaction is carbamoyl phosphate + L-aspartate = N-carbamoyl-L-aspartate + phosphate + H(+). Its pathway is pyrimidine metabolism; UMP biosynthesis via de novo pathway; (S)-dihydroorotate from bicarbonate: step 2/3. In terms of biological role, catalyzes the condensation of carbamoyl phosphate and aspartate to form carbamoyl aspartate and inorganic phosphate, the committed step in the de novo pyrimidine nucleotide biosynthesis pathway. The chain is Aspartate carbamoyltransferase catalytic subunit from Solibacter usitatus (strain Ellin6076).